The primary structure comprises 334 residues: Adenosine deaminase (334 aa).

The Zn(2+) site is built by His12 and His14. Residues His14, Asp16, and Gly170 each contribute to the substrate site. A Zn(2+)-binding site is contributed by His197. Residue Glu200 is the Proton donor of the active site. Asp278 serves as a coordination point for Zn(2+). Residue Asp279 participates in substrate binding.

It belongs to the metallo-dependent hydrolases superfamily. Adenosine and AMP deaminases family. Adenosine deaminase subfamily. It depends on Zn(2+) as a cofactor.

It carries out the reaction adenosine + H2O + H(+) = inosine + NH4(+). The catalysed reaction is 2'-deoxyadenosine + H2O + H(+) = 2'-deoxyinosine + NH4(+). Functionally, catalyzes the hydrolytic deamination of adenosine and 2-deoxyadenosine. This Vibrio parahaemolyticus serotype O3:K6 (strain RIMD 2210633) protein is Adenosine deaminase.